The primary structure comprises 202 residues: Outer-membrane lipoprotein carrier protein (202 aa).

Positions 1-20 (MKKQLLIGSVLLVASSQVWA) are cleaved as a signal peptide.

Belongs to the LolA family. Monomer.

The protein resides in the periplasm. Its function is as follows. Participates in the translocation of lipoproteins from the inner membrane to the outer membrane. Only forms a complex with a lipoprotein if the residue after the N-terminal Cys is not an aspartate (The Asp acts as a targeting signal to indicate that the lipoprotein should stay in the inner membrane). This is Outer-membrane lipoprotein carrier protein from Aeromonas salmonicida (strain A449).